The sequence spans 338 residues: UDP-glucose 4-epimerase (338 aa).

Residues 16–17, 37–42, 59–60, 81–85, T126, Y153, K157, and F181 contribute to the NAD(+) site; these read YI, IDINHT, NL, and FAAKT. Positions 126 and 153 each coordinate substrate. The Proton acceptor role is filled by Y153. Substrate contacts are provided by residues N182, 198-199, 215-217, R230, and 294-297; these read TL, FLY, and RAGD.

The protein belongs to the NAD(P)-dependent epimerase/dehydratase family. Homodimer. It depends on NAD(+) as a cofactor.

It carries out the reaction UDP-alpha-D-glucose = UDP-alpha-D-galactose. The protein operates within carbohydrate metabolism; galactose metabolism. In terms of biological role, involved in the metabolism of galactose. Catalyzes the conversion of UDP-galactose (UDP-Gal) to UDP-glucose (UDP-Glc) through a mechanism involving the transient reduction of NAD. The chain is UDP-glucose 4-epimerase (galE) from Mycoplasma pneumoniae (strain ATCC 29342 / M129 / Subtype 1) (Mycoplasmoides pneumoniae).